Here is a 108-residue protein sequence, read N- to C-terminus: uncharacterized protein (108 aa).

An N-terminal signal peptide occupies residues 1–21; the sequence is MFRSLFLAAALMAFTPLAANA.

It to E.coli YaaX.

This is an uncharacterized protein from Escherichia coli O157:H7.